The sequence spans 1134 residues: MAYPELDAADFLQQLARRKEFKSLISPPVDQKKLIHDLRSHFVQIGGPGCEKGGRAFFPCDPYASPFPSIKGLQLHNAQLFVQNFQNPNTPYSRLLLNWQTGTGKSIAAIAIARQFMNHYMNFIENAPWIFVVGFTRAIIQTEMLRRPELGFVSYKEVAELHRLLHIAKQSGSTTSVESRHLNGFVSTLKRRLTDRNRGGFFQFYGYKEFASKLFNITSKGEEKNFDVLSLFHRSDEAEDTLNENDISQFVQKISEAESNGLIRVNQKIMEQLRGGLLIADEIHNVYNIQERNNYGIALQYVLDAFPPHQAPRAVFMSATPVTGSVMEYVDLLNLLVPRHELPNGQPLQRQQLFDNSGHSVKWKKDALALVERLSTGRVSFLLDTNTNYYPERIFAGKMLSYRNEMLPYLHFIECPMSDYQLETLKQLGPDPKISSNAYSIYDMVFPNPKFSKQTEPKAYGLFNSTETPAALSMASTDWLLENGVQIIEPSRRTPFNVSGSFLSLQPPTHISGLAFYSGKYTQMMKDILSIIRQGRGKILIYHNRVRMSGVLILQEILQSNGILNEVSSPVGTTRCSICAAIRDDHTTHSDHQFIPARFTILHSEIEPAVRERSLALFNASSNLEGHQLRILIGSKVIVEGLNFQAVRYEMIMSLPLDIPRLIQVFGRVVRKNSHMELPPNERNVTIYLYVSTTPDGGPELAKYAQKLKEYILIQEGDKALRKHAIDGFTNQIKIDKPMLESLPLSPSITPANVGATVLNTFEAYGYGEQEVKTISNIIISLFMARPVWTYSELWKAVSTPKLIQGITIDNKLFSEDNFALALVSLCYSKNQCKELCIQNRLCTIMHVPAKPEHLYIAAVLNYKKEPVLDIETYIRDFQPPTMHSIRITKYLEHSQTKEPFQVLYEKFQKDFQDEPMEQVLIHYPASFHYTMLEALIIDNLAGMGALVEVYKKFFIAFSKKDIQPFPDIFKIISHVPGDDDTLVGYATEDSVRLITSRQDKTWHEIPLYMLNINVKRKENDIVIGYMESKGKTLKFKIRPPIQVLKKNEITDIRMLNRGAVCETRGREEQQKIADQLGISLNLTKISAIKLCLLIRNTLLQKEMEARNQPNGMQDGIRWFYLFNDKMPSLVHTS.

Residues 52–352 (KGGRAFFPCD…PNGQPLQRQQ (301 aa)) form the Helicase ATP-binding domain. Residue 99-106 (WQTGTGKS) coordinates ATP. Positions 281–284 (DEIH) match the DEAH box motif. The Helicase C-terminal domain occupies 524 to 725 (MMKDILSIIR…EGDKALRKHA (202 aa)).

The protein belongs to the DEAD box helicase family. DEAH subfamily.

It localises to the virion. The enzyme catalyses ATP + H2O = ADP + phosphate + H(+). In terms of biological role, putative initation factor. This is Early transcription factor large subunit homolog from African swine fever virus (isolate Pig/Kenya/KEN-50/1950) (ASFV).